The following is a 616-amino-acid chain: Dihydroxy-acid dehydratase (616 aa).

Residue Asp-81 participates in Mg(2+) binding. Residue Cys-122 participates in [2Fe-2S] cluster binding. Asp-123 and Lys-124 together coordinate Mg(2+). Lys-124 carries the N6-carboxylysine modification. Cys-195 lines the [2Fe-2S] cluster pocket. Glu-491 is a binding site for Mg(2+). Ser-517 (proton acceptor) is an active-site residue.

This sequence belongs to the IlvD/Edd family. Homodimer. It depends on [2Fe-2S] cluster as a cofactor. The cofactor is Mg(2+).

The catalysed reaction is (2R)-2,3-dihydroxy-3-methylbutanoate = 3-methyl-2-oxobutanoate + H2O. It catalyses the reaction (2R,3R)-2,3-dihydroxy-3-methylpentanoate = (S)-3-methyl-2-oxopentanoate + H2O. It functions in the pathway amino-acid biosynthesis; L-isoleucine biosynthesis; L-isoleucine from 2-oxobutanoate: step 3/4. It participates in amino-acid biosynthesis; L-valine biosynthesis; L-valine from pyruvate: step 3/4. In terms of biological role, functions in the biosynthesis of branched-chain amino acids. Catalyzes the dehydration of (2R,3R)-2,3-dihydroxy-3-methylpentanoate (2,3-dihydroxy-3-methylvalerate) into 2-oxo-3-methylpentanoate (2-oxo-3-methylvalerate) and of (2R)-2,3-dihydroxy-3-methylbutanoate (2,3-dihydroxyisovalerate) into 2-oxo-3-methylbutanoate (2-oxoisovalerate), the penultimate precursor to L-isoleucine and L-valine, respectively. This Escherichia coli O7:K1 (strain IAI39 / ExPEC) protein is Dihydroxy-acid dehydratase.